The following is a 1049-amino-acid chain: Protein argonaute 12 (1049 aa).

Residues 1 to 53 (MSSRGGGGGGRRGGRGGGGGREGGGGGGGGGGRGGQGRGDLGVVGERQGGGRG) are compositionally biased toward gly residues. 2 disordered regions span residues 1 to 101 (MSSR…GVQV) and 144 to 192 (GGAP…KAVT). The span at 54-65 (AGERGGRHDAPR) shows a compositional bias: basic and acidic residues. A compositionally biased stretch (gly residues) spans 66-76 (GRGGVAVGAGA). The span at 144 to 160 (GGAPPAGQGSSLAAAQG) shows a compositional bias: low complexity. The region spanning 404–515 (PVMDFAVQYL…LPMEVCSILE (112 aa)) is the PAZ domain. A Piwi domain is found at 694–1012 (LLIVILTEIS…GAFRARYYME (319 aa)).

Belongs to the argonaute family. Ago subfamily.

In terms of biological role, probably involved in the RNA silencing pathway. May bind to short RNAs such as microRNAs (miRNAs) or short interfering RNAs (siRNAs), and represses the translation of mRNAs which are complementary to them. This Oryza sativa subsp. japonica (Rice) protein is Protein argonaute 12 (AGO12).